Reading from the N-terminus, the 139-residue chain is Histone H2AX (139 aa).

The interval 1–24 (MSSTATTKGGRGKPKASKSVSRSS) is disordered. Ser-136 carries the post-translational modification Phosphoserine; by ATM and ATR. The short motif at 136-137 (SQ) is the [ST]-Q motif element.

This sequence belongs to the histone H2A family. In terms of assembly, the nucleosome is a histone octamer containing two molecules each of H2A, H2B, H3 and H4 assembled in one H3-H4 heterotetramer and two H2A-H2B heterodimers. The octamer wraps approximately 147 bp of DNA. Interacts with numerous proteins required for DNA damage signaling and repair when phosphorylated on Ser-136. Post-translationally, phosphorylated on Ser-136 (to form gamma-H2AX) in response to DNA double strand breaks (DSBs) generated by exogenous genotoxic agents and by stalled replication forks, and may also occur during meiotic recombination events. Phosphorylation can extend up to several thousand nucleosomes from the actual site of the DSB and may mark the surrounding chromatin for recruitment of proteins required for DNA damage signaling and repair. Widespread phosphorylation may also serve to amplify the damage signal or aid repair of persistent lesions. Phosphorylation of Ser-136 in response to ionizing radiation is mediated by ATM while defects in DNA replication induce Ser-136 phosphorylation subsequent to activation of ATR. Dephosphorylation of Ser-136 by PP2A is required for DNA DSB repair.

Its subcellular location is the nucleus. The protein resides in the chromosome. Its function is as follows. Variant histone H2A which replaces conventional H2A in a subset of nucleosomes. Nucleosomes wrap and compact DNA into chromatin, limiting DNA accessibility to the cellular machineries which require DNA as a template. Histones thereby play a central role in transcription regulation, DNA repair, DNA replication and chromosomal stability. DNA accessibility is regulated via a complex set of post-translational modifications of histones, also called histone code, and nucleosome remodeling. Required for checkpoint-mediated arrest of cell cycle progression in response to low doses of ionizing radiation and for efficient repair of DNA double strand breaks (DSBs) specifically when modified by C-terminal phosphorylation. This Cicer arietinum (Chickpea) protein is Histone H2AX (HIS2A).